The following is a 232-amino-acid chain: Pirin-like protein CC_1473 (232 aa).

Belongs to the pirin family.

The sequence is that of Pirin-like protein CC_1473 from Caulobacter vibrioides (strain ATCC 19089 / CIP 103742 / CB 15) (Caulobacter crescentus).